Consider the following 366-residue polypeptide: GTP cyclohydrolase 1 type 2 homolog (366 aa).

Zn(2+) is bound by residues histidine 64, histidine 65, aspartate 102, histidine 326, and glutamate 329.

Belongs to the GTP cyclohydrolase I type 2/NIF3 family. As to quaternary structure, homohexamer.

The chain is GTP cyclohydrolase 1 type 2 homolog from Staphylococcus aureus (strain MSSA476).